We begin with the raw amino-acid sequence, 66 residues long: U10-theraphotoxin-Cg1a 2 (66 aa).

Residues 1 to 21 form the signal peptide; that stretch reads MKTSVLFVIFGLALLLCLSFA. The propeptide occupies 22-29; the sequence is AELEDTGR. Cystine bridges form between cysteine 31/cysteine 46, cysteine 38/cysteine 51, and cysteine 45/cysteine 58.

It belongs to the neurotoxin 10 (Hwtx-1) family. 29 (Jztx-13) subfamily. As to expression, expressed by the venom gland.

Its subcellular location is the secreted. Functionally, probable ion channel inhibitor. This Chilobrachys guangxiensis (Chinese earth tiger tarantula) protein is U10-theraphotoxin-Cg1a 2.